The following is a 68-amino-acid chain: Cytotoxic linear peptide (68 aa).

Positions 1–23 (MKTQFAILLIALVLFQMFSQSEA) are cleaved as a signal peptide. At leucine 36 the chain carries Leucine amide. The propeptide occupies 40-68 (GLNELDDLDELFDGEISQADIDFLKELMS).

Belongs to the non-disulfide-bridged peptide (NDBP) superfamily. Short antimicrobial peptide (group 4) family. As to expression, expressed by the venom gland.

The protein localises to the secreted. It localises to the target cell membrane. Functionally, amphipathic peptide that has antibacterial activities. This Pandinus cavimanus (Tanzanian red clawed scorpion) protein is Cytotoxic linear peptide.